The primary structure comprises 127 residues: Large ribosomal subunit protein bL12 (127 aa).

The protein belongs to the bacterial ribosomal protein bL12 family. Homodimer. Part of the ribosomal stalk of the 50S ribosomal subunit. Forms a multimeric L10(L12)X complex, where L10 forms an elongated spine to which 2 to 4 L12 dimers bind in a sequential fashion. Binds GTP-bound translation factors.

Functionally, forms part of the ribosomal stalk which helps the ribosome interact with GTP-bound translation factors. Is thus essential for accurate translation. This is Large ribosomal subunit protein bL12 from Pelobacter propionicus (strain DSM 2379 / NBRC 103807 / OttBd1).